Consider the following 271-residue polypeptide: ELH (271 aa).

A signal peptide spans 1-28; sequence MKRPNNRPTNTMSLILCLTLSSLCVSSQ. 2 consecutive propeptides follow at residues 29–95 and 162–184; these read SASV…NEKR and AAGG…RRKR. The disordered stretch occupies residues 162–190; the sequence is AAGGMEQSEGQNPETESHSRRKRSVLTPS. Lys241 is subject to Lysine amide.

It belongs to the molluscan ELH family. Bag cell neurons.

Its subcellular location is the secreted. In terms of biological role, ELH acts as a neurotransmitter locally, upon neurons of the abdominal ganglion and as a hormone by diffusing into the circulating hemolymph and modulating the activity of other organs. It specifically causes contraction of smooth muscle in the ovotestis and expulsion of the egg string. Its function is as follows. Alpha-BCP decreases the activity of a cluster of neurons in the left upper quadrant of the abdominal ganglion. Beta-BCP specifically excites 2 neurons, L1 and R1, in the abdominal ganglion. This is ELH from Aplysia californica (California sea hare).